We begin with the raw amino-acid sequence, 297 residues long: Large ribosomal subunit protein uL10 (297 aa).

This sequence belongs to the universal ribosomal protein uL10 family. As to quaternary structure, part of the 50S ribosomal subunit. Forms part of the ribosomal stalk which helps the ribosome interact with GTP-bound translation factors. Forms a heptameric L10(L12)2(L12)2(L12)2 complex, where L10 forms an elongated spine to which the L12 dimers bind in a sequential fashion.

Forms part of the ribosomal stalk, playing a central role in the interaction of the ribosome with GTP-bound translation factors. This Methanococcus voltae protein is Large ribosomal subunit protein uL10.